The following is a 239-amino-acid chain: Transcriptional regulatory protein BtsR (239 aa).

Residues 3 to 116 enclose the Response regulatory domain; that stretch reads KVLIVDDEPL…RLEKTLHRLR (114 aa). At D54 the chain carries 4-aspartylphosphate. The HTH LytTR-type domain occupies 137–239; it reads IPCTGHSRIY…LKSLKEAIGL (103 aa).

In terms of processing, phosphorylated by BtsS.

Member of the two-component regulatory system BtsS/BtsR. BtsR regulates expression of btsT by binding to its promoter region. This chain is Transcriptional regulatory protein BtsR, found in Salmonella typhi.